The following is a 119-amino-acid chain: Large ribosomal subunit protein uL18 (119 aa).

The protein belongs to the universal ribosomal protein uL18 family. As to quaternary structure, part of the 50S ribosomal subunit; part of the 5S rRNA/L5/L18/L25 subcomplex. Contacts the 5S and 23S rRNAs.

Functionally, this is one of the proteins that bind and probably mediate the attachment of the 5S RNA into the large ribosomal subunit, where it forms part of the central protuberance. In Ruegeria sp. (strain TM1040) (Silicibacter sp.), this protein is Large ribosomal subunit protein uL18.